The chain runs to 299 residues: ATP phosphoribosyltransferase (299 aa).

This sequence belongs to the ATP phosphoribosyltransferase family. Long subfamily. The cofactor is Mg(2+).

It is found in the cytoplasm. It carries out the reaction 1-(5-phospho-beta-D-ribosyl)-ATP + diphosphate = 5-phospho-alpha-D-ribose 1-diphosphate + ATP. It participates in amino-acid biosynthesis; L-histidine biosynthesis; L-histidine from 5-phospho-alpha-D-ribose 1-diphosphate: step 1/9. Feedback inhibited by histidine. Functionally, catalyzes the condensation of ATP and 5-phosphoribose 1-diphosphate to form N'-(5'-phosphoribosyl)-ATP (PR-ATP). Has a crucial role in the pathway because the rate of histidine biosynthesis seems to be controlled primarily by regulation of HisG enzymatic activity. In Actinobacillus pleuropneumoniae serotype 5b (strain L20), this protein is ATP phosphoribosyltransferase.